The chain runs to 348 residues: MTAQPQTLKIRRPDDWHIHLRDDEMLSTVLPYTSEVFARAIVMPNLAQPITTVASAIAYRERILAAVPAGHKFTPLMTCYLTNSLDVKELTTGFEQGVFTAAKLYPANATTNSTHGVSDIPAIYPLFEQMQKIGMPLLIHGEVTDAAVDIFDREARFIDQILEPIRQKFPELKIVFEHITTKDAADYVLAGNRFLGATVTPQHLMFNRNHMLVGGIRPHLFCLPILKRSTHQQALRAAVASGSDRFFLGTDSAPHAKHRKESSCGCAGVFNAPAALPAYASVFEELNALQHLEAFCALNGPRFYGLPVNDDVVELVRTPFLQPEEIPLGNESVIPFLAGQTLNWSVKR.

Zn(2+)-binding residues include histidine 17 and histidine 19. Substrate contacts are provided by residues 19–21 and asparagine 45; that span reads HLR. Positions 103, 140, and 178 each coordinate Zn(2+). Position 103 is an N6-carboxylysine (lysine 103). A substrate-binding site is contributed by histidine 140. Leucine 223 is a binding site for substrate. Aspartate 251 is a Zn(2+) binding site. Aspartate 251 is a catalytic residue. The substrate site is built by histidine 255 and alanine 267.

This sequence belongs to the metallo-dependent hydrolases superfamily. DHOase family. Class II DHOase subfamily. Homodimer. Zn(2+) is required as a cofactor.

The enzyme catalyses (S)-dihydroorotate + H2O = N-carbamoyl-L-aspartate + H(+). It functions in the pathway pyrimidine metabolism; UMP biosynthesis via de novo pathway; (S)-dihydroorotate from bicarbonate: step 3/3. Its function is as follows. Catalyzes the reversible cyclization of carbamoyl aspartate to dihydroorotate. The protein is Dihydroorotase of Yersinia pseudotuberculosis serotype I (strain IP32953).